The chain runs to 230 residues: Demethylmenaquinone methyltransferase (230 aa).

Residues Thr62, Asp80, 100 to 101 (DA), and Ser117 each bind S-adenosyl-L-methionine.

The protein belongs to the class I-like SAM-binding methyltransferase superfamily. MenG/UbiE family.

The catalysed reaction is a 2-demethylmenaquinol + S-adenosyl-L-methionine = a menaquinol + S-adenosyl-L-homocysteine + H(+). It participates in quinol/quinone metabolism; menaquinone biosynthesis; menaquinol from 1,4-dihydroxy-2-naphthoate: step 2/2. Functionally, methyltransferase required for the conversion of demethylmenaquinol (DMKH2) to menaquinol (MKH2). The sequence is that of Demethylmenaquinone methyltransferase from Mycolicibacterium paratuberculosis (strain ATCC BAA-968 / K-10) (Mycobacterium paratuberculosis).